The following is a 179-amino-acid chain: MECMAVNDISYGREAEIWPRDYSMLARRVQFLRFNDIPVRLVSNNARIIIGYIAKFNPRENLILASDKPKGNKRIEVKLESLAILEELSGNDAFNLSLVPTDEFNLQQYTPSRRDYFSICNKCYKQGVGIKIYMKYGQVLTGKTTGVNACQVGVRTSNGNHMQVMFDWVSRITSSDYAE.

In terms of biological role, transcriptional repressor of the FliC phase-1 flagellin. In Salmonella abony, this protein is Repressor of phase 1 flagellin gene (fljA).